A 305-amino-acid polypeptide reads, in one-letter code: Tyrosine recombinase XerC (305 aa).

Residues 4–95 enclose the Core-binding (CB) domain; it reads ISIQELIKQW…TVKNFYKFLE (92 aa). Residues 116–298 form the Tyr recombinase domain; the sequence is LLPKALSVDD…SIKHLEAVYN (183 aa). Residues arginine 159, lysine 182, histidine 250, arginine 253, and histidine 276 contribute to the active site. The O-(3'-phospho-DNA)-tyrosine intermediate role is filled by tyrosine 285.

Belongs to the 'phage' integrase family. XerC subfamily. In terms of assembly, forms a cyclic heterotetrameric complex composed of two molecules of XerC and two molecules of XerD.

The protein resides in the cytoplasm. Functionally, site-specific tyrosine recombinase, which acts by catalyzing the cutting and rejoining of the recombining DNA molecules. The XerC-XerD complex is essential to convert dimers of the bacterial chromosome into monomers to permit their segregation at cell division. It also contributes to the segregational stability of plasmids. This is Tyrosine recombinase XerC from Rickettsia typhi (strain ATCC VR-144 / Wilmington).